A 20-amino-acid polypeptide reads, in one-letter code: Punein (20 aa).

Residues 1-20 (YHYYNPEENHFCATWDASKP) form the Barwin domain.

In terms of processing, the N-terminus is blocked.

The protein is Punein of Punica granatum (Pomegranate).